Here is a 745-residue protein sequence, read N- to C-terminus: Elongation factor G, mitochondrial (745 aa).

The tr-type G domain maps to 40-317 (ERIRNIGISA…AVLDYLPNPG (278 aa)). GTP-binding positions include 49–56 (AHIDSGKT), 116–120 (DTPGH), and 170–173 (NKLD).

This sequence belongs to the TRAFAC class translation factor GTPase superfamily. Classic translation factor GTPase family. EF-G/EF-2 subfamily.

It is found in the mitochondrion. The protein operates within protein biosynthesis; polypeptide chain elongation. Its function is as follows. Mitochondrial GTPase that catalyzes the GTP-dependent ribosomal translocation step during translation elongation. During this step, the ribosome changes from the pre-translocational (PRE) to the post-translocational (POST) state as the newly formed A-site-bound peptidyl-tRNA and P-site-bound deacylated tRNA move to the P and E sites, respectively. Catalyzes the coordinated movement of the two tRNA molecules, the mRNA and conformational changes in the ribosome. Essential during development as it acts as a retrograde signal from mitochondria to the nucleus to slow down cell proliferation if mitochondrial energy output is low. The protein is Elongation factor G, mitochondrial of Drosophila melanogaster (Fruit fly).